Here is a 391-residue protein sequence, read N- to C-terminus: S-adenosylmethionine synthase (391 aa).

Position 14 (H14) interacts with ATP. D16 serves as a coordination point for Mg(2+). E42 contributes to the K(+) binding site. 2 residues coordinate L-methionine: E55 and Q98. Residues 98-108 form a flexible loop region; it reads QSADIAMGVDE. Residues 172–174, 238–239, D247, 253–254, A270, and K274 each bind ATP; these read DGK, RF, and RK. D247 contributes to the L-methionine binding site. K278 contacts L-methionine.

Belongs to the AdoMet synthase family. In terms of assembly, homotetramer; dimer of dimers. The cofactor is Mg(2+). K(+) is required as a cofactor.

The protein localises to the cytoplasm. It catalyses the reaction L-methionine + ATP + H2O = S-adenosyl-L-methionine + phosphate + diphosphate. It functions in the pathway amino-acid biosynthesis; S-adenosyl-L-methionine biosynthesis; S-adenosyl-L-methionine from L-methionine: step 1/1. Its function is as follows. Catalyzes the formation of S-adenosylmethionine (AdoMet) from methionine and ATP. The overall synthetic reaction is composed of two sequential steps, AdoMet formation and the subsequent tripolyphosphate hydrolysis which occurs prior to release of AdoMet from the enzyme. The chain is S-adenosylmethionine synthase from Clostridium botulinum (strain Alaska E43 / Type E3).